The chain runs to 110 residues: N(4)-acetylcytidine amidohydrolase (110 aa).

One can recognise an ASCH domain in the interval 6 to 93 (TFFERFEQDI…IQEIYPGLEQ (88 aa)). K20 (proton acceptor) is an active-site residue. The Nucleophile role is filled by T23. E73 (proton donor) is an active-site residue.

It belongs to the N(4)-acetylcytidine amidohydrolase family.

The enzyme catalyses N(4)-acetylcytidine + H2O = cytidine + acetate + H(+). It catalyses the reaction N(4)-acetyl-2'-deoxycytidine + H2O = 2'-deoxycytidine + acetate + H(+). The catalysed reaction is N(4)-acetylcytosine + H2O = cytosine + acetate + H(+). In terms of biological role, catalyzes the hydrolysis of N(4)-acetylcytidine (ac4C). This Shewanella sp. (strain ANA-3) protein is N(4)-acetylcytidine amidohydrolase.